A 221-amino-acid chain; its full sequence is Thyrotroph embryonic factor (221 aa).

Positions 72–116 (ESASSSTASPPSSSTAVFQPSETVSSTESSLEKERETPSPIDPNC) are disordered. The segment covering 73–100 (SASSSTASPPSSSTAVFQPSETVSSTES) has biased composition (low complexity). Residues 173–221 (DEKYWTRRKKNNVAAKRSRDARRLKENQITIRAAFLEKENTALRTEVAD) enclose the bZIP domain. The segment at 175 to 195 (KYWTRRKKNNVAAKRSRDARR) is basic motif. Positions 196–203 (LKENQITI) are leucine-zipper.

It belongs to the bZIP family. PAR subfamily. Binds DNA as a homodimer or a heterodimer. Can form a heterodimer with DBP.

It is found in the nucleus. Its function is as follows. Transcription factor that binds to and transactivates the TSHB promoter. Binds to a minimal DNA-binding sequence 5'-[TC][AG][AG]TTA[TC][AG]-3'. The chain is Thyrotroph embryonic factor (TEF) from Phodopus sungorus (Striped hairy-footed hamster).